Consider the following 61-residue polypeptide: Probable pancreatic secretory proteinase inhibitor (61 aa).

The 56-residue stretch at 6-61 (LYRKPSCGEMSAMHACPMNFAPVCGTDGNTYPNECSLCFQRQNTKTDILITKDDRC) folds into the Kazal-like domain. 3 disulfides stabilise this stretch: cysteine 12–cysteine 43, cysteine 21–cysteine 40, and cysteine 29–cysteine 61.

It localises to the secreted. This Anguilla anguilla (European freshwater eel) protein is Probable pancreatic secretory proteinase inhibitor.